The sequence spans 528 residues: MHQPSDFTNLDVNFLIFQSNLPITNNAPTDISIVNNSINILPVEINNNNNNNNNNNNNNNNNNNNNNNNNNNNNKNNNDGDDAAATNSINVIPVFEKTIQIGTTTKSGHFILDATAEVNDIQEIEENKDFIVRDTQQNRVLIGEGHYGKVYRSMYVSSDGRSLVNKMLKGKRECTKEVEALIDVFDASKMVTTQYFTTLGFSSIIMENMVDIGYVTLKQLLSMDDKQFSALASPFTCRSQMIKPIINAMVIALYSVNIEKNYTHFDLNHGNIFVNIHTLDTCQSISGSGSGSGSGSGSNTRNPVVLGDFGCARKMDVPIRLCDTNGHENYKSLERYWDYNQCRIKTTSFIRDNEDIFSLGVLIFEMLLTFVHPGTTLFEQNVLFLLKFHGIEIVPTGGPNNNYTTLKVAFSNDIRNFTSNTQFTTITFDSKFNPIISQIINYIQYYRNRPNSSQVLESLINNHQYSLNNNLPPIFVENPNDKYEPVDANSSDDSSVLYHSYDSSDADDTPSFEITITRDNFNQSINHQ.

The segment covering 49–77 (NNNNNNNNNNNNNNNNNNNNNNNNNNKNN) has biased composition (low complexity). Residues 49-84 (NNNNNNNNNNNNNNNNNNNNNNNNNNKNNNDGDDAA) form a disordered region. In terms of domain architecture, Protein kinase spans 136-466 (QQNRVLIGEG…ESLINNHQYS (331 aa)). ATP contacts are provided by residues 142-150 (IGEGHYGKV) and Lys-166. Catalysis depends on Asp-266, which acts as the Proton acceptor.

This sequence belongs to the protein kinase superfamily. Ser/Thr protein kinase family.

It catalyses the reaction L-seryl-[protein] + ATP = O-phospho-L-seryl-[protein] + ADP + H(+). The catalysed reaction is L-threonyl-[protein] + ATP = O-phospho-L-threonyl-[protein] + ADP + H(+). In Dictyostelium discoideum (Social amoeba), this protein is Probable serine/threonine-protein kinase DDB_G0282417.